A 333-amino-acid chain; its full sequence is T-cell surface glycoprotein CD1b1 (333 aa).

The signal sequence occupies residues 1–17; it reads MLLVALALLAFLFPAGD. At 18–302 the chain is on the extracellular side; that stretch reads TQNALQWPTS…LYWGHSISIG (285 aa). N-linked (GlcNAc...) asparagine glycans are attached at residues asparagine 38, asparagine 75, and asparagine 146. Cystine bridges form between cysteine 120/cysteine 184, cysteine 149/cysteine 163, and cysteine 224/cysteine 279. In terms of domain architecture, Ig-like spans 197 to 295; sequence PDIQKQVKPD…LEGQDIILYW (99 aa). The chain crosses the membrane as a helical span at residues 303–323; the sequence is WIILAVLVPCLIVLVLFVLWF. Topologically, residues 324–333 are cytoplasmic; the sequence is YRRWSYEDIL. The short motif at 329–332 is the Internalization signal element; sequence YEDI.

Heterodimer with B2M (beta-2-microglobulin). Interacts with saposin C.

Its subcellular location is the cell membrane. The protein localises to the endosome membrane. It localises to the lysosome membrane. Its function is as follows. Antigen-presenting protein that binds self and non-self lipid and glycolipid antigens and presents them to T-cell receptors on natural killer T-cells. In Cavia porcellus (Guinea pig), this protein is T-cell surface glycoprotein CD1b1 (CD1B1).